We begin with the raw amino-acid sequence, 447 residues long: MDNHPWLPNISRIKDMLREIGVDDVEQLFQDVPRDLILRRELKVGYDSPLPEEDIRWRLNQVAERNLKLRYPPFLGAGAYPHSIPSVIRFILSRSEFYTAYTPYQPEVNQGLLQGLFEYQSLMAELLEMDVVNSSHYDWGGSLAEAVLMGYRINGKRKVVIPESINPLHEEVLRTWVSGRELEVVKIPVGKDGKIDLDFLSSLNSDEISSIYIQQPNFFGVVETELEYVTDWARKNNVVSIMGVSPLSLGLIKTPGELGFDIAVGDGQELGIPLNFGGPYSGILATRMDMKLVRQMPGRIVGMTQDSQGRRGFTLILQTREQFARREKATSNITTNEALIALANAVYLSLLGKEGIRELATEIYKRSHYALKRMEDEELGKRKWESDFFEEFTFVFRSDYDRIHSELLRRGIHGGLRLGPREALFCVTEVHTKRAIDDLVNAMKEVA.

It belongs to the GcvP family. N-terminal subunit subfamily. In terms of assembly, the glycine cleavage system is composed of four proteins: P, T, L and H. In this organism, the P 'protein' is a heterodimer of two subunits.

It carries out the reaction N(6)-[(R)-lipoyl]-L-lysyl-[glycine-cleavage complex H protein] + glycine + H(+) = N(6)-[(R)-S(8)-aminomethyldihydrolipoyl]-L-lysyl-[glycine-cleavage complex H protein] + CO2. Its function is as follows. The glycine cleavage system catalyzes the degradation of glycine. The P protein binds the alpha-amino group of glycine through its pyridoxal phosphate cofactor; CO(2) is released and the remaining methylamine moiety is then transferred to the lipoamide cofactor of the H protein. In Metallosphaera sedula (strain ATCC 51363 / DSM 5348 / JCM 9185 / NBRC 15509 / TH2), this protein is Probable glycine dehydrogenase (decarboxylating) subunit 1.